We begin with the raw amino-acid sequence, 60 residues long: Homeobox protein engrailed-like A (60 aa).

Residues 1–41 (ADQLARLRAEFQANRYLTEERRQNLARELSLNEAQIKIWFQ) constitute a DNA-binding region (homeobox).

It belongs to the engrailed homeobox family.

The protein localises to the nucleus. The polypeptide is Homeobox protein engrailed-like A (Myxine glutinosa (Atlantic hagfish)).